We begin with the raw amino-acid sequence, 883 residues long: Histidine--tRNA ligase, cytoplasmic (883 aa).

It belongs to the class-II aminoacyl-tRNA synthetase family.

The protein resides in the cytoplasm. The protein localises to the cytosol. The enzyme catalyses tRNA(His) + L-histidine + ATP = L-histidyl-tRNA(His) + AMP + diphosphate + H(+). The chain is Histidine--tRNA ligase, cytoplasmic from Arabidopsis thaliana (Mouse-ear cress).